The following is a 278-amino-acid chain: Myb/SANT-like DNA-binding domain-containing protein 1 (278 aa).

The segment at 1–27 (MVRGAGPGPSLSALSHPTGASGMAAAE) is disordered. In terms of domain architecture, Myb-like spans 44–129 (RNWTDAEMRG…PDWPYYLAID (86 aa)). Residues 138–168 (SCDGKLPDSQPPGPSTSQTEASLSPPAKSTP) are disordered.

This Homo sapiens (Human) protein is Myb/SANT-like DNA-binding domain-containing protein 1 (MSANTD1).